The chain runs to 119 residues: uncharacterized protein (119 aa).

It localises to the mitochondrion. The protein resides in the nucleus. This is an uncharacterized protein from Schizosaccharomyces pombe (strain 972 / ATCC 24843) (Fission yeast).